Here is a 318-residue protein sequence, read N- to C-terminus: Serpentine receptor class delta-25 (318 aa).

7 consecutive transmembrane segments (helical) span residues 5 to 25, 38 to 58, 88 to 108, 126 to 146, 176 to 196, 226 to 246, and 258 to 278; these read LLHS…MYLA, VVIT…FFVM, HMFM…SYLF, IAFY…SIYI, ITLL…YTFI, TFKL…VAMF, and IVSV…IIFV.

Belongs to the nematode receptor-like protein srd family.

The protein resides in the membrane. This Caenorhabditis elegans protein is Serpentine receptor class delta-25 (srd-25).